Consider the following 130-residue polypeptide: Small ribosomal subunit protein uS9 (130 aa).

It belongs to the universal ribosomal protein uS9 family.

This Pectobacterium atrosepticum (strain SCRI 1043 / ATCC BAA-672) (Erwinia carotovora subsp. atroseptica) protein is Small ribosomal subunit protein uS9.